Consider the following 204-residue polypeptide: HTH-type transcriptional repressor KstR (204 aa).

The 61-residue stretch at 18–78 (RERRKRILDA…SALGREFERI (61 aa)) folds into the HTH tetR-type domain. Residues 41–60 (QMRAVAERADVAVGTLYRYF) constitute a DNA-binding region (H-T-H motif).

Homodimer.

Functionally, controls the expression of genes used for utilizing diverse lipids as energy sources. This is HTH-type transcriptional repressor KstR (kstR) from Mycolicibacterium smegmatis (strain ATCC 700084 / mc(2)155) (Mycobacterium smegmatis).